We begin with the raw amino-acid sequence, 137 residues long: Large ribosomal subunit protein uL16 (137 aa).

The protein belongs to the universal ribosomal protein uL16 family. In terms of assembly, part of the 50S ribosomal subunit.

In terms of biological role, binds 23S rRNA and is also seen to make contacts with the A and possibly P site tRNAs. In Stutzerimonas stutzeri (strain A1501) (Pseudomonas stutzeri), this protein is Large ribosomal subunit protein uL16.